The chain runs to 747 residues: Sex-specific storage-protein 1 (747 aa).

The signal sequence occupies residues 1–15 (MRVLVLLACLAAASA). N-linked (GlcNAc...) asparagine glycosylation is found at N494 and N706.

It belongs to the hemocyanin family. In terms of tissue distribution, fat body.

It localises to the secreted. It is found in the extracellular space. Larval storage protein (LSP) which may serve as a store of amino acids for synthesis of adult proteins. This Bombyx mori (Silk moth) protein is Sex-specific storage-protein 1 (SP1).